A 456-amino-acid polypeptide reads, in one-letter code: MTKTLPPVTVIGGGLAGTEAAWQIAQAGVPVTLYEMRPVQKSPAHHTADLAELVCSNSFGAASSDRAAGLLHEELRRLQSVIISTADQHRVPAGGALAVDRGVFSQDLTQKLAEHPLVTFRREPLDQIPSEGITVLATGPLTTAALATELQQFTGLEYMSFFDAASPIIVGESINQDIAFLASRYDKGEAAYLNCPMDPAQYQAFRAALCEAEQAELKDFELETAKFFEGCLPIEELARRGEDTMRFGPLKPVGLFDARLGDFRAPENKGKRPYAVVQLRQEDKQGQLWNMVGFQTNLRWGEQKRVFRMIPGLENAEFVRMGVMHRNTFLNSPELLEATLQFKKRPTLLAAGQLIGTEGYTAAAAGGWLAGTNAARLAQGLTPLTLPETTMMGALFEFIHSASPKHFQPMPPNFGIIPPLAERVRSKKERYGVYRDRSLTDLEQWREESCRPAALV.

12–17 (GGGLAG) provides a ligand contact to FAD.

It belongs to the MnmG family. TrmFO subfamily. It depends on FAD as a cofactor.

It is found in the cytoplasm. It catalyses the reaction uridine(54) in tRNA + (6R)-5,10-methylene-5,6,7,8-tetrahydrofolate + NADH + H(+) = 5-methyluridine(54) in tRNA + (6S)-5,6,7,8-tetrahydrofolate + NAD(+). It carries out the reaction uridine(54) in tRNA + (6R)-5,10-methylene-5,6,7,8-tetrahydrofolate + NADPH + H(+) = 5-methyluridine(54) in tRNA + (6S)-5,6,7,8-tetrahydrofolate + NADP(+). Functionally, catalyzes the folate-dependent formation of 5-methyl-uridine at position 54 (M-5-U54) in all tRNAs. The sequence is that of Methylenetetrahydrofolate--tRNA-(uracil-5-)-methyltransferase TrmFO from Picosynechococcus sp. (strain ATCC 27264 / PCC 7002 / PR-6) (Agmenellum quadruplicatum).